The chain runs to 290 residues: Cilia- and flagella-associated protein 298 (290 aa).

It belongs to the CFAP298 family. Interacts with dnaaf1/swt. Interacts with lrrc6/sea. Interacts with dvl (via DEP and PDZ domains). Strongly expressed in ciliated tissues of the embryonic trunk, including the pronephric ducts and spinal canal.

Its subcellular location is the cytoplasm. The protein resides in the cytoskeleton. The protein localises to the cilium basal body. Its function is as follows. Plays a role in motile cilium function, possibly by acting on outer dynein arm assembly. Seems to be important for initiation rather than maintenance of cilium motility. Required for correct positioning of cilia at the apical cell surface, suggesting an additional role in the planar cell polarity (PCP) pathway. May suppress canonical Wnt signaling activity. In Danio rerio (Zebrafish), this protein is Cilia- and flagella-associated protein 298.